Reading from the N-terminus, the 400-residue chain is Cytochrome P450 BJ-1 homolog (400 aa).

Residue C349 coordinates heme.

The protein belongs to the cytochrome P450 family. It depends on heme as a cofactor.

Cytochromes P450 are a group of heme-thiolate monooxygenases. They oxidize a variety of structurally unrelated compounds, including steroids, fatty acids, and xenobiotics. The polypeptide is Cytochrome P450 BJ-1 homolog (cyp112A2) (Sinorhizobium fredii (strain NBRC 101917 / NGR234)).